The sequence spans 215 residues: MIIATLTGRTIEDMVELAIEAVEQGADALEVRLDYLENLDMSTALRAVRECTRYERVVATLRREEEGGLYKGDEDRRLEILERVSSEADYVDLELDVAEEEIISPSCETIVSYHNFENTPPKEELIGIRDRCAELGDVAKVVTMARGHEDALRILEVVRTAEAPTIGFAMGEEAKYTRVVSVLIGGFATYAAVRKKAAPGQLTVEETRKLLELLG.

Residues 30–32 (EVR) and R62 each bind 3-dehydroquinate. H114 serves as the catalytic Proton donor/acceptor. K140 acts as the Schiff-base intermediate with substrate in catalysis. 3-dehydroquinate is bound by residues R178 and Q201.

It belongs to the type-I 3-dehydroquinase family. Homodimer.

It catalyses the reaction 3-dehydroquinate = 3-dehydroshikimate + H2O. It functions in the pathway metabolic intermediate biosynthesis; chorismate biosynthesis; chorismate from D-erythrose 4-phosphate and phosphoenolpyruvate: step 3/7. Involved in the third step of the chorismate pathway, which leads to the biosynthesis of aromatic amino acids. Catalyzes the cis-dehydration of 3-dehydroquinate (DHQ) and introduces the first double bond of the aromatic ring to yield 3-dehydroshikimate. This Methanopyrus kandleri (strain AV19 / DSM 6324 / JCM 9639 / NBRC 100938) protein is 3-dehydroquinate dehydratase.